A 484-amino-acid chain; its full sequence is Myosin-binding protein H (484 aa).

Positions 1 to 78 (MTGKATPEAS…KPEAPSEDVP (78 aa)) are disordered. Phosphothreonine occurs at positions 2, 6, and 26. A compositionally biased stretch (low complexity) spans 41–71 (QEQAPEPQKQPQAQDPAAHEAPATPATTKPE). Residues 80–175 (APLQLTLEDV…LDQPVHIQEI (96 aa)) form the Fibronectin type-III 1 domain. The Ig-like C2-type 1 domain maps to 179–267 (PKIRVPRHLR…EGLEAKAAID (89 aa)). In terms of domain architecture, Fibronectin type-III 2 spans 276-371 (PPSSIKLLDV…TKELAHIHKA (96 aa)). In terms of domain architecture, Ig-like C2-type 2 spans 389 to 479 (PSFTQPVADR…PAVDCRLEVK (91 aa)).

The protein belongs to the immunoglobulin superfamily. MyBP family. In terms of tissue distribution, skeletal muscle.

In terms of biological role, binds to myosin; probably involved in interaction with thick myofilaments in the A-band. In Rattus norvegicus (Rat), this protein is Myosin-binding protein H (Mybph).